We begin with the raw amino-acid sequence, 104 residues long: Replication restart protein PriB (104 aa).

The SSB domain maps to 1–101 (MTNRLALSGT…LHAEQIELID (101 aa)).

The protein belongs to the PriB family. As to quaternary structure, homodimer. Interacts with PriA and DnaT. Component of the replication restart primosome. Primosome assembly occurs via a 'hand-off' mechanism. PriA binds to replication forks, subsequently PriB then DnaT bind; DnaT then displaces ssDNA to generate the helicase loading substrate.

Its function is as follows. Involved in the restart of stalled replication forks, which reloads the replicative helicase on sites other than the origin of replication; the PriA-PriB pathway is the major replication restart pathway. During primosome assembly it facilitates complex formation between PriA and DnaT on DNA; stabilizes PriA on DNA. Stimulates the DNA unwinding activity of PriA helicase. This Salmonella agona (strain SL483) protein is Replication restart protein PriB.